A 395-amino-acid polypeptide reads, in one-letter code: GPI-anchor transamidase (395 aa).

The N-terminal stretch at 1-27 (MVGTWFLCRGFTTLAGLLLLPFGSLAA) is a signal peptide. Topologically, residues 28 to 368 (SQIEDQAEQF…PKLKDWHPPG (341 aa)) are lumenal. Ca(2+) contacts are provided by Asp79, Ile82, Glu118, and Asp120. Residue His164 is the Proton donor of the active site. The active-site Nucleophile; acyl-thioester intermediate is the Cys206. A protein-binding residues include Cys206, Ser232, and Ser234. Positions 231–236 (DSLSHQ) are autoinhibitory loop. A disulfide bond links Cys275 and Cys280. Residues 369-385 (GFILGLWALIIMVFFKT) traverse the membrane as a helical segment. Over 386-395 (YGIKHMKFIF) the chain is Cytoplasmic.

Belongs to the peptidase C13 family. As to quaternary structure, heteropentamer. Part of the GPI-anchor transamidase complex, consisting of PIGK, PIGT, PIGS, PIGU and GAA1. Interacts with GPAA1. Interacts with PIGT; this interaction, via a disulfide link, stabilizes the expression of GAA1 and PIGK and links them to PIGS. In terms of processing, the disulfide bond between PIGK/GPI8 and PIGT is important for normal enzyme activity.

It is found in the endoplasmic reticulum membrane. It participates in glycolipid biosynthesis; glycosylphosphatidylinositol-anchor biosynthesis. Its activity is regulated as follows. In the absence of proproteins substrates, exists in an inactive state with a disrupted catalytic site by an autoinhibitory loop. The binding of proprotein substrates, particularly the CSP region, to GPI-T triggers concerted conformational changes that alleviate the inhibition by the autoinhibitory loop. Meanwhile, proprotein residues near the omega- site induce the formation of a catalytic cleft for catalysis, following which the products are released and GPI-T reverts to the inactive state. Functionally, catalytic subunit of the glycosylphosphatidylinositol-anchor (GPI-anchor) transamidase (GPI-T) complex that catalyzes the formation of the linkage between a proprotein and a GPI-anchor and participates in GPI anchored protein biosynthesis. Recognizes diverse proproteins at a C-terminal signal peptide (CSP) region that lacks consensus sequence and replaces it with a GPI-anchor via a transamidation reaction. Transamidation catalysis reaction follows a two-phase mechanism. In the acyl-enzyme phase, the carbonyl group of the proproteins's omega-site undergoes a nucleophilic attack forming an enzyme-substrate thioester bond. Followed by a general acid catalysis that allows CSP releasing, regenerating the carbonyl, and forming the acyl-enzyme intermediate. In the GPI-anchor attachment phase, the amino group of the GPI-anchor's ethanolamine phosphate, the one on third mannose (EtNP3), mediates a nucleophilic attack on the carbonyl of the acyl-enzyme intermediate, replacing the CSP, allowing GPI-anchor attachment to the omega-residue, therefore forming the product and freeing the enzyme. In Sus scrofa (Pig), this protein is GPI-anchor transamidase.